A 288-amino-acid chain; its full sequence is Solute carrier family 25 member 47-B (288 aa).

Solcar repeat units lie at residues 1-83 (MHLA…ILQF), 99-191 (AHIF…ICEI), and 199-286 (PGWP…VVRL). 6 helical membrane-spanning segments follow: residues 3–23 (LADFLAGSVGGAFGVAVGYPL), 58–75 (GMSMPISTVSISSSLVFG), 101–121 (IFLAGFTGGVTQVLVMAPADI), 175–195 (GPSFATYFLTYNTICEILTTE), 199–219 (PGWPVVLLAGGVSGMCGWAVG), and 257–277 (VLFRGLTVNCIRAFPVNMSVF).

Belongs to the mitochondrial carrier (TC 2.A.29) family.

It localises to the mitochondrion inner membrane. This chain is Solute carrier family 25 member 47-B (slc25a47b), found in Danio rerio (Zebrafish).